The sequence spans 469 residues: Neuraminidase (469 aa).

Residues 1–9 (MNPNQKIIT) lie on the Intravirion side of the membrane. Residues 10-30 (IGSVSLTIATICFLMQIAILV) form a helical membrane-spanning segment. The involved in apical transport and lipid raft association stretch occupies residues 11–33 (GSVSLTIATICFLMQIAILVTTV). At 31 to 469 (TTVTLHFKQY…DGADINLMPI (439 aa)) the chain is on the virion surface side. The tract at residues 36 to 88 (HFKQYECDSPANKQVMPCEPIIIERNITEIVYLTNTTIEKEICPKLVEYRNWS) is hypervariable stalk region. 3 N-linked (GlcNAc...) asparagine; by host glycosylation sites follow: asparagine 61, asparagine 70, and asparagine 86. Positions 91 to 469 (QCKITGFAPF…DGADINLMPI (379 aa)) are head of neuraminidase. 8 disulfide bridges follow: cysteine 92/cysteine 417, cysteine 124/cysteine 129, cysteine 183/cysteine 230, cysteine 232/cysteine 237, cysteine 278/cysteine 291, cysteine 280/cysteine 289, cysteine 318/cysteine 337, and cysteine 421/cysteine 447. Arginine 118 provides a ligand contact to substrate. A glycan (N-linked (GlcNAc...) asparagine; by host) is linked at asparagine 146. The active-site Proton donor/acceptor is the aspartate 151. Residue arginine 152 participates in substrate binding. N-linked (GlcNAc...) asparagine; by host glycosylation is found at asparagine 200 and asparagine 234. 276 to 277 (EE) provides a ligand contact to substrate. A substrate-binding site is contributed by arginine 292. 3 residues coordinate Ca(2+): aspartate 293, glycine 297, and aspartate 324. A substrate-binding site is contributed by arginine 371. Residue asparagine 402 is glycosylated (N-linked (GlcNAc...) asparagine; by host). Catalysis depends on tyrosine 406, which acts as the Nucleophile.

The protein belongs to the glycosyl hydrolase 34 family. Homotetramer. Ca(2+) serves as cofactor. Post-translationally, N-glycosylated.

The protein localises to the virion membrane. Its subcellular location is the host apical cell membrane. The catalysed reaction is Hydrolysis of alpha-(2-&gt;3)-, alpha-(2-&gt;6)-, alpha-(2-&gt;8)- glycosidic linkages of terminal sialic acid residues in oligosaccharides, glycoproteins, glycolipids, colominic acid and synthetic substrates.. Inhibited by the neuraminidase inhibitors zanamivir (Relenza) and oseltamivir (Tamiflu). These drugs interfere with the release of progeny virus from infected cells and are effective against all influenza strains. Resistance to neuraminidase inhibitors is quite rare. Catalyzes the removal of terminal sialic acid residues from viral and cellular glycoconjugates. Cleaves off the terminal sialic acids on the glycosylated HA during virus budding to facilitate virus release. Additionally helps virus spread through the circulation by further removing sialic acids from the cell surface. These cleavages prevent self-aggregation and ensure the efficient spread of the progeny virus from cell to cell. Otherwise, infection would be limited to one round of replication. Described as a receptor-destroying enzyme because it cleaves a terminal sialic acid from the cellular receptors. May facilitate viral invasion of the upper airways by cleaving the sialic acid moieties on the mucin of the airway epithelial cells. Likely to plays a role in the budding process through its association with lipid rafts during intracellular transport. May additionally display a raft-association independent effect on budding. Plays a role in the determination of host range restriction on replication and virulence. Sialidase activity in late endosome/lysosome traffic seems to enhance virus replication. The chain is Neuraminidase from Influenza A virus (strain A/Beijing/39/1975 H3N2).